Reading from the N-terminus, the 214-residue chain is Killer cell lectin-like receptor subfamily B member 1 (214 aa).

Residues 1 to 42 (MDAPVLYAELNLAETRGLRCTSAPSLPQDACQGPGWHRVALK) are Cytoplasmic-facing. Residues 43–63 (LGCAGLIFLLMVLSVLVGFLV) traverse the membrane as a helical; Signal-anchor for type II membrane protein segment. At 64-214 (QKPLIEKCSV…WICQKTLKHV (151 aa)) the chain is on the extracellular side. The 111-residue stretch at 98–208 (HCDKCLFTSQ…CSSDNHWICQ (111 aa)) folds into the C-type lectin domain. Cystine bridges form between Cys119–Cys207 and Cys186–Cys199.

It localises to the membrane. The chain is Killer cell lectin-like receptor subfamily B member 1 (Klrb1) from Mus musculus (Mouse).